We begin with the raw amino-acid sequence, 362 residues long: Epoxide hydrolase 4 (362 aa).

The helical; Signal-anchor for type II membrane protein transmembrane segment at 17–37 (SLLFWSLVYCYCGLCASIHLL) threads the bilayer. The region spanning 94–211 (PLMLLLHGFP…EYILRHPAQL (118 aa)) is the AB hydrolase-1 domain. Residue D169 is the Nucleophile of the active site. The active-site Proton donor is Y281. The active-site Proton acceptor is H336.

Belongs to the AB hydrolase superfamily. Epoxide hydrolase family.

Its subcellular location is the membrane. In Homo sapiens (Human), this protein is Epoxide hydrolase 4 (EPHX4).